The chain runs to 857 residues: ATP-dependent RNA helicase DDX24 (857 aa).

A disordered region spans residues 61–179 (NPSRLFSSEE…SPKLPKKSKK (119 aa)). Ser-80 and Ser-92 each carry phosphoserine. The segment covering 152 to 161 (PRKKKNKGKK) has biased composition (basic residues). Ser-170 carries the phosphoserine modification. Positions 193 to 221 (SAWRDLFVPKAVLRALSFLGFSAPTPIQA) match the Q motif motif. Positions 225–528 (APAIRDKLDI…RILHKKHVKK (304 aa)) constitute a Helicase ATP-binding domain. ATP is bound at residue 238-245 (AETGSGKT). The disordered stretch occupies residues 279-363 (RFGATAHLGS…NEDGEEKFDA (85 aa)). A phosphoserine mark is found at Ser-288 and Ser-296. Residues 290-307 (CKDRTESGVLPEEARIET) are compositionally biased toward basic and acidic residues. The span at 309–330 (AQPSDSGVQATPETSASASAQT) shows a compositional bias: polar residues. Basic and acidic residues predominate over residues 345–363 (LEEKPVPKQNEDGEEKFDA). Lys-370 is covalently cross-linked (Glycyl lysine isopeptide (Lys-Gly) (interchain with G-Cter in SUMO2)). The DEAD box motif lies at 471-474 (DEAD). Residues 576 to 723 (DLYLYYFLMQ…LFPVQSKYMD (148 aa)) form the Helicase C-terminal domain. Lys-624 is covalently cross-linked (Glycyl lysine isopeptide (Lys-Gly) (interchain with G-Cter in SUMO2)). Residues 808-857 (RYPTQSGRPPQPVLASRNIESALSCLSRQKRRRKKPKEPRAPPQPGSSTS) form a disordered region. A compositionally biased stretch (polar residues) spans 825-834 (NIESALSCLS). A compositionally biased stretch (basic residues) spans 835-844 (RQKRRRKKPK). A compositionally biased stretch (pro residues) spans 848–857 (APPQPGSSTS).

The protein belongs to the DEAD box helicase family. DDX24/MAK5 subfamily. Interacts with FADD. Interacts with RIPK1; this interaction disrupts RLR signaling activation of IFN-dependent transcription factor IRF7. Interacts with NIP7. Interacts with EP300; this interaction prevents TP53 acetylation mediated by EP300. Post-translationally, ubiquitinated by MDM2 without targeting DDX24 for proteasomal degradation. Instead, polyubiquitylated DDX24 promotes interaction with NIP7, a component of pre-rRNP processing complex, and associates with pre-rRNA molecules and pre-ribosomal particles.

It localises to the cytoplasm. The protein resides in the nucleus. It catalyses the reaction ATP + H2O = ADP + phosphate + H(+). In terms of biological role, ATP-dependent RNA helicase that plays a role in various aspects of RNA metabolism including pre-mRNA splicing and is thereby involved in different biological processes such as cell cycle regulation or innate immunity. Plays an inhibitory role in TP53 transcriptional activity and subsequently in TP53 controlled cell growth arrest and senescence by inhibiting its EP300 mediated acetylation. Negatively regulates cytosolic RNA-mediated innate immune signaling at least in part by affecting RIPK1/IRF7 interactions. Alternatively, possesses antiviral activity by recognizing gammaherpesvirus transcripts in the context of lytic reactivation. Plays an essential role in cell cycle regulation in vascular smooth muscle cells by interacting with and regulating FANCA (Fanconi anemia complementation group A) mRNA. This is ATP-dependent RNA helicase DDX24 (Ddx24) from Mus musculus (Mouse).